We begin with the raw amino-acid sequence, 847 residues long: Endo-beta-N-acetylglucosaminidase EndoSd (847 aa).

An N-terminal signal peptide occupies residues 1–36; sequence MDKRLLVKRTLGCVCAATLMGAILATHHDSLISVKA. The GH18 domain occupies 65-377; the sequence is PLYAGYFRTW…HPVVDNISHT (313 aa). A glycoprotein is bound at residue His-107. The active-site Proton donor is Glu-186. Glu-188, Gln-250, Tyr-252, Glu-288, Glu-289, Asn-295, and Tyr-339 together coordinate a glycoprotein. 4 LRR repeats span residues 423-446, 447-470, 483-506, and 507-530; these read LERY…LEKL, SHLQ…ILPE, MTGL…DVNG, and LTHL…ADRK. A carbohydrate-binding module (CBM) region spans residues 683–836; it reads MENLAKGAKV…YTELQILGQR (154 aa). Lys-704, Asp-707, and Glu-829 together coordinate Ca(2+).

This sequence belongs to the glycosyl hydrolase 18 family.

It is found in the secreted. The protein resides in the host extracellular space. It carries out the reaction an N(4)-(oligosaccharide-(1-&gt;3)-[oligosaccharide-(1-&gt;6)]-beta-D-Man-(1-&gt;4)-beta-D-GlcNAc-(1-&gt;4)-alpha-D-GlcNAc)-L-asparaginyl-[protein] + H2O = an oligosaccharide-(1-&gt;3)-[oligosaccharide-(1-&gt;6)]-beta-D-Man-(1-&gt;4)-D-GlcNAc + N(4)-(N-acetyl-beta-D-glucosaminyl)-L-asparaginyl-[protein]. In terms of biological role, endoglucosidase that acts as a host immune evasion factor by mediating hydrolysis of the N-linked glycan from the Fc region of host immunoglobulin-gamma (IgG) during infection. Specifically catalyzes the hydrolysis of the beta-1,4 linkage between the first two N-acetylglucosamine residues of the complex-type N-linked glycan located on 'Asn-297' of the Fc region of IgG antibodies (IGHG1, IGHG2, IGHG3 or IGHG4), thereby preventing interaction between IgGs and Fc receptors and ability to activate the complement pathway. Shows a specificity for biantennary complex type N-glycans; does neither cleave larger complex type glycans nor oligomannose and nor hybrid-type glycans. Specifically acts on IgGs; does not act on immunoglobulin alpha, beta, delta or mu. The protein is Endo-beta-N-acetylglucosaminidase EndoSd of Streptococcus dysgalactiae.